A 664-amino-acid polypeptide reads, in one-letter code: Metal-nicotianamine transporter YSL2 (664 aa).

A run of 14 helical transmembrane segments spans residues 31–51, 55–75, 103–123, 147–167, 209–229, 268–288, 314–334, 378–398, 409–429, 457–477, 496–516, 549–569, 594–614, and 629–649; these read ITVRAIVASLLIGIVYSVICL, LTTGLVPNLNISSALLAFVFL, CAVACYSISLAGGFASYLLGL, GVGWMTSFLFVTSFIGLVVLV, GFIKSFGLSFFWAFFGWFYSG, LVNLSLLFGAILSWGIMWPLI, FICIALILGDGLYNFVKILFF, IPLWMACVGYLFFSLVSIIAI, FVLVAYLLAPSLSFCNAYGAG, VVAGMVACGLIKSIVSVSADL, VAQAIGTAIGCVVAPLTFFLF, SALPKHCLELCYGFFAFAVAA, FLVGGSFAIDMCIGSLVVYVW, and VASGLICGDGLWILPSSLLAL.

The protein belongs to the YSL (TC 2.A.67.2) family. Expressed in roots, leaves and weakly in shoots. Restricted to the veins, to the central cylinder of the young roots and to the pericycle and the endodermis cells facing the meta-xylem tubes in older roots. Expressed in the vasculature of sepals, petals, anthers, stigma and siliques, but not in developing seeds or in meristematic zones.

The protein localises to the cell membrane. In terms of biological role, may be involved in the lateral transport of nicotianamine-chelated metals in the vasculature. This is Metal-nicotianamine transporter YSL2 (YSL2) from Arabidopsis thaliana (Mouse-ear cress).